A 226-amino-acid chain; its full sequence is tRNA (guanine-N(7)-)-methyltransferase (226 aa).

S-adenosyl-L-methionine-binding residues include E59, E84, D111, and D134. D134 is an active-site residue. Substrate is bound at residue K138. The segment at 140–145 (RHNKRR) is interaction with RNA. Residues D170 and 205 to 208 (TKFE) contribute to the substrate site.

This sequence belongs to the class I-like SAM-binding methyltransferase superfamily. TrmB family.

The catalysed reaction is guanosine(46) in tRNA + S-adenosyl-L-methionine = N(7)-methylguanosine(46) in tRNA + S-adenosyl-L-homocysteine. The protein operates within tRNA modification; N(7)-methylguanine-tRNA biosynthesis. Catalyzes the formation of N(7)-methylguanine at position 46 (m7G46) in tRNA. The protein is tRNA (guanine-N(7)-)-methyltransferase of Chromobacterium violaceum (strain ATCC 12472 / DSM 30191 / JCM 1249 / CCUG 213 / NBRC 12614 / NCIMB 9131 / NCTC 9757 / MK).